The following is a 349-amino-acid chain: Core protein VP7 (349 aa).

The N-linked (GlcNAc...) asparagine; by host glycan is linked to asparagine 287.

The protein belongs to the orbivirus VP7 family. As to quaternary structure, homotrimer that assemble in a complex of 260 capsomers on an inner scaffold composed of VP3.

The protein resides in the virion. Its function is as follows. The VP7 protein is one of the five proteins (with VP1, VP3, VP4, and VP6) which form the inner capsid of the virus. The sequence is that of Core protein VP7 (Segment-7) from Bluetongue virus 1 (isolate Australia) (BTV 1).